The sequence spans 212 residues: Pyridoxine/pyridoxamine 5'-phosphate oxidase (212 aa).

Substrate-binding positions include 8–11 (RTNY) and lysine 66. Residues 61–66 (RIVLLK), 76–77 (FT), lysine 83, and glutamine 105 each bind FMN. 3 residues coordinate substrate: tyrosine 123, arginine 127, and serine 131. Residues 140 to 141 (QS) and tryptophan 185 each bind FMN. 191-193 (RLH) serves as a coordination point for substrate. Arginine 195 is a binding site for FMN.

The protein belongs to the pyridoxamine 5'-phosphate oxidase family. In terms of assembly, homodimer. Requires FMN as cofactor.

The catalysed reaction is pyridoxamine 5'-phosphate + O2 + H2O = pyridoxal 5'-phosphate + H2O2 + NH4(+). It catalyses the reaction pyridoxine 5'-phosphate + O2 = pyridoxal 5'-phosphate + H2O2. It participates in cofactor metabolism; pyridoxal 5'-phosphate salvage; pyridoxal 5'-phosphate from pyridoxamine 5'-phosphate: step 1/1. It functions in the pathway cofactor metabolism; pyridoxal 5'-phosphate salvage; pyridoxal 5'-phosphate from pyridoxine 5'-phosphate: step 1/1. Its function is as follows. Catalyzes the oxidation of either pyridoxine 5'-phosphate (PNP) or pyridoxamine 5'-phosphate (PMP) into pyridoxal 5'-phosphate (PLP). This is Pyridoxine/pyridoxamine 5'-phosphate oxidase from Leptospira biflexa serovar Patoc (strain Patoc 1 / Ames).